A 274-amino-acid polypeptide reads, in one-letter code: Large ribosomal subunit protein uL2 (274 aa).

A disordered region spans residues 223–257; it reads VAMNPVDHPHGGGEGRTSGGRHPVTPWGIPTKGYK.

The protein belongs to the universal ribosomal protein uL2 family. In terms of assembly, part of the 50S ribosomal subunit. Forms a bridge to the 30S subunit in the 70S ribosome.

Functionally, one of the primary rRNA binding proteins. Required for association of the 30S and 50S subunits to form the 70S ribosome, for tRNA binding and peptide bond formation. It has been suggested to have peptidyltransferase activity; this is somewhat controversial. Makes several contacts with the 16S rRNA in the 70S ribosome. In Geobacter sulfurreducens (strain ATCC 51573 / DSM 12127 / PCA), this protein is Large ribosomal subunit protein uL2.